The primary structure comprises 331 residues: Glyceraldehyde-3-phosphate dehydrogenase (331 aa).

NAD(+)-binding positions include 12–13 (RI), Asp34, Arg78, and Thr120. Residues 149-151 (SCT), Thr180, 209-210 (TG), and Arg232 contribute to the D-glyceraldehyde 3-phosphate site. The Nucleophile role is filled by Cys150. Asn314 is a binding site for NAD(+).

It belongs to the glyceraldehyde-3-phosphate dehydrogenase family. As to quaternary structure, homotetramer.

It localises to the cytoplasm. The enzyme catalyses D-glyceraldehyde 3-phosphate + phosphate + NAD(+) = (2R)-3-phospho-glyceroyl phosphate + NADH + H(+). The protein operates within carbohydrate degradation; glycolysis; pyruvate from D-glyceraldehyde 3-phosphate: step 1/5. Functionally, catalyzes the oxidative phosphorylation of glyceraldehyde 3-phosphate (G3P) to 1,3-bisphosphoglycerate (BPG) using the cofactor NAD. The first reaction step involves the formation of a hemiacetal intermediate between G3P and a cysteine residue, and this hemiacetal intermediate is then oxidized to a thioester, with concomitant reduction of NAD to NADH. The reduced NADH is then exchanged with the second NAD, and the thioester is attacked by a nucleophilic inorganic phosphate to produce BPG. This is Glyceraldehyde-3-phosphate dehydrogenase (gapA) from Escherichia fergusonii (strain ATCC 35469 / DSM 13698 / CCUG 18766 / IAM 14443 / JCM 21226 / LMG 7866 / NBRC 102419 / NCTC 12128 / CDC 0568-73).